Here is an 84-residue protein sequence, read N- to C-terminus: Small ribosomal subunit protein bS16 (84 aa).

Belongs to the bacterial ribosomal protein bS16 family.

This is Small ribosomal subunit protein bS16 from Desulforapulum autotrophicum (strain ATCC 43914 / DSM 3382 / VKM B-1955 / HRM2) (Desulfobacterium autotrophicum).